The following is a 471-amino-acid chain: MSVLKEYRTVSEVVGPLMIVDQVAGVHYNELVDITLHNGERRKGQVLEVQGDKAMVQLFEGSTGINLAKTKVRFTGHPLELAVSEDMVGRIFDGMGQPIDGGPELIPEKYLDIDGQAINPVARDYPDEFIQTGISAIDHLNTLVRGQKLPVFSGSGLPHNELAAQIARQATVLNSDDNFAVVFAAMGITFEEAEFFMNDLRETGAIDRSVLFINLANDPAIERIATPRIALTTAEYLAYEKGMHVLVIMTDMTNYCEALREVSAARREVPGRRGYPGYLYTNLSTLYERAGRLIGKKGSVTQIPILTMPEDDITHPIPDLTGYITEGQIILSQELYKNGFRPPINVLPSLSRLKDKGSGEGKTRQDHAATMNQLFAAYAQGKQAKELAVVLGESALSETDKLYVAFTNRFEEEYINQGFYTNRSIEESLDLGWELLSILPRTELKRIKDDMLDRYLPKADTTMTKVFVAND.

It belongs to the ATPase alpha/beta chains family.

Functionally, produces ATP from ADP in the presence of a proton gradient across the membrane. The V-type beta chain is a regulatory subunit. This Streptococcus pyogenes serotype M12 (strain MGAS2096) protein is V-type ATP synthase beta chain.